We begin with the raw amino-acid sequence, 207 residues long: MFISFEGCEGTGKTTHSRYLFEKLSKKYSCVLTKEPGGGLFNEVIRNILLHSSNKQIDFHTEALLFAADRAEHLSKLIIPALQQNKIVICDRYLDSTIAYQVYARGLSQDFVLNINNFALNYIPNITFYLDLDPKIGIQRVKQFRPKEINSFDLQKLSFHKKVRKGYLDLCQKDQQKRIFLIDASKPLENIYNIIEQKLKEVFQIEL.

Residue 7-14 (GCEGTGKT) participates in ATP binding.

This sequence belongs to the thymidylate kinase family.

It carries out the reaction dTMP + ATP = dTDP + ADP. Its function is as follows. Phosphorylation of dTMP to form dTDP in both de novo and salvage pathways of dTTP synthesis. The polypeptide is Thymidylate kinase (Onion yellows phytoplasma (strain OY-M)).